Here is a 356-residue protein sequence, read N- to C-terminus: MNLHRISSEPKCKCLNHEIQNARLHYGRFAVYPLFPGQAITIGTAIRRALLGEVHSTCITSAYVVGASHEYSTLKGIRESIHDILLNLKDIVFKSDTLERQEGILLFNGPGIVTAQHIKLPPVVQVVDNTQYIARLEMPTSIEIHITLENTKTCTSLNTMPTTKGRFILDAALKPVRNMNYSIHSLGEGDMRQEMLVLEVWTNGSLTPQEVISQASQNLNDLLKPLLKVERYFQAKQNIHKKRMFTPTQSENLNMDQIEMIGGNKLIDQPLLPADSHLNSSLSLNIDNLVHLEGISIDDLQISVRASNCLKKVGIYTIRQLLSYTQQDLFQIKNLGKKSVEQIVIAIRKSYGHILG.

The interval 1 to 230 (MNLHRISSEP…DLLKPLLKVE (230 aa)) is alpha N-terminal domain (alpha-NTD). The alpha C-terminal domain (alpha-CTD) stretch occupies residues 267-356 (IDQPLLPADS…IRKSYGHILG (90 aa)).

Belongs to the RNA polymerase alpha chain family. In terms of assembly, in plastids the minimal PEP RNA polymerase catalytic core is composed of four subunits: alpha, beta, beta', and beta''. When a (nuclear-encoded) sigma factor is associated with the core the holoenzyme is formed, which can initiate transcription.

It localises to the plastid. It is found in the chloroplast. It carries out the reaction RNA(n) + a ribonucleoside 5'-triphosphate = RNA(n+1) + diphosphate. In terms of biological role, DNA-dependent RNA polymerase catalyzes the transcription of DNA into RNA using the four ribonucleoside triphosphates as substrates. The polypeptide is DNA-directed RNA polymerase subunit alpha (Zygnema circumcarinatum (Green alga)).